We begin with the raw amino-acid sequence, 483 residues long: Inositol-pentakisphosphate 2-kinase (483 aa).

Residues 140 to 144 (EIKPK) carry the EXKPK motif motif. The tract at residues 279-298 (SNRSGEPRKMHLSESKPHCE) is disordered. Residues 281–297 (RSGEPRKMHLSESKPHC) are compositionally biased toward basic and acidic residues.

Belongs to the IPK1 type 2 family. In terms of tissue distribution, expressed both maternally and zygotically. Expressed in cleavage-stage embryos. Ubiquitously distributed throughout blastula stages of embryogenesis. At the onset of gastrulation, it is enriched in cells around the blastoderm margin. At shield stage, expression is detected in the deep involuted cells that contribute to mesendoderm. During mid and late gastrula stages, it is strongly expressed in axial mesendoderm. However, it is not present in the nascent tailbud at yolk plug closure (YPC) stage. Expression in axial mesendoderm is reduced at the 2 somite stage (SS). At 6 SS, it is expressed in cells surrounding Kupffer's vesicle, but apparently not within. By 10 SS, it is no longer detected as a specific signal above background.

It localises to the cytoplasm. Its subcellular location is the nucleus. The enzyme catalyses 1D-myo-inositol 1,3,4,5,6-pentakisphosphate + ATP = 1D-myo-inositol hexakisphosphate + ADP + H(+). In terms of biological role, phosphorylates Ins(1,3,4,5,6)P5 at position 2 to form Ins(1,2,3,4,5,6)P6 (InsP6 or phytate). InsP6 is involved in many processes such as mRNA export, non-homologous end-joining, endocytosis and ion channel regulation. InsP6 also acts as a key regulator of left-right asymmetry in embryo, probably by regulating asymmetric Ca(2+) during left-right specification. This is Inositol-pentakisphosphate 2-kinase (ippk) from Danio rerio (Zebrafish).